A 302-amino-acid chain; its full sequence is Short-chain dehydrogenase/reductase 1 (302 aa).

Residues 20–23 (NKGL), Arg43, 71–72 (DV), and Asn98 each bind NADP(+). Residue Ser170 participates in substrate binding. Residues Tyr226, Lys230, and 257-262 (VKTDIN) contribute to the NADP(+) site. Tyr226 (proton acceptor) is an active-site residue.

The protein belongs to the short-chain dehydrogenases/reductases (SDR) family. Mainly expressed in flowers and flower buds, to a lesser extent in leaves and, at low levels, in stems and roots.

The protein operates within secondary metabolite biosynthesis; terpenoid biosynthesis. Functionally, component of the oleanane-type triterpene saponins (e.g. saponarioside A and saponarioside B) biosynthetic pathway, leading to the production of natural products with detergent properties used as traditional sources of soap. A dehydrogenase/reductase that, together with UGT74CD1, mediates the conversion of QA-tri to QA-triF; UGT74CD1 may transfer 4-keto-6-deoxy-glucose to QA-tri, which is in turn reduced to D-fucose by SDR1, thus leading to QA-triF formation via the initiation of the C-28 sugar chain. The chain is Short-chain dehydrogenase/reductase 1 from Saponaria officinalis (Common soapwort).